We begin with the raw amino-acid sequence, 463 residues long: Argininosuccinate lyase (463 aa).

It belongs to the lyase 1 family. Argininosuccinate lyase subfamily.

Its subcellular location is the cytoplasm. The catalysed reaction is 2-(N(omega)-L-arginino)succinate = fumarate + L-arginine. It functions in the pathway amino-acid biosynthesis; L-arginine biosynthesis; L-arginine from L-ornithine and carbamoyl phosphate: step 3/3. This is Argininosuccinate lyase from Chlorobaculum parvum (strain DSM 263 / NCIMB 8327) (Chlorobium vibrioforme subsp. thiosulfatophilum).